We begin with the raw amino-acid sequence, 133 residues long: Ribosome-binding factor A (133 aa).

This sequence belongs to the RbfA family. As to quaternary structure, monomer. Binds 30S ribosomal subunits, but not 50S ribosomal subunits or 70S ribosomes.

It localises to the cytoplasm. In terms of biological role, one of several proteins that assist in the late maturation steps of the functional core of the 30S ribosomal subunit. Associates with free 30S ribosomal subunits (but not with 30S subunits that are part of 70S ribosomes or polysomes). Required for efficient processing of 16S rRNA. May interact with the 5'-terminal helix region of 16S rRNA. The polypeptide is Ribosome-binding factor A (Klebsiella pneumoniae (strain 342)).